The following is a 406-amino-acid chain: 2,3-bisphosphoglycerate-independent phosphoglycerate mutase (406 aa).

Residues 156-165 (ITEGDPHKEG) are compositionally biased toward basic and acidic residues. Residues 156-177 (ITEGDPHKEGVPIPEVKPLDNS) are disordered.

The protein belongs to the BPG-independent phosphoglycerate mutase family. A-PGAM subfamily.

It catalyses the reaction (2R)-2-phosphoglycerate = (2R)-3-phosphoglycerate. It functions in the pathway carbohydrate degradation; glycolysis; pyruvate from D-glyceraldehyde 3-phosphate: step 3/5. Functionally, catalyzes the interconversion of 2-phosphoglycerate and 3-phosphoglycerate. The chain is 2,3-bisphosphoglycerate-independent phosphoglycerate mutase from Methanococcus aeolicus (strain ATCC BAA-1280 / DSM 17508 / OCM 812 / Nankai-3).